Consider the following 141-residue polypeptide: Large ribosomal subunit protein uL16 (141 aa).

Residues 1-21 (MLMPKRVKYRKQQRGHNRGMA) are disordered.

It belongs to the universal ribosomal protein uL16 family. Part of the 50S ribosomal subunit.

Functionally, binds 23S rRNA and is also seen to make contacts with the A and possibly P site tRNAs. The polypeptide is Large ribosomal subunit protein uL16 (Roseiflexus castenholzii (strain DSM 13941 / HLO8)).